The sequence spans 343 residues: Flavone 3'-O-methyltransferase OMT1 (343 aa).

A (E)-ferulate-binding site is contributed by Asn107. S-adenosyl-L-homocysteine is bound by residues Gly184, Asp207, Asp227, Met228, Met240, and Lys241. The active-site Proton acceptor is the His245. Asp246 lines the (E)-5-hydroxyferulate pocket. Catalysis depends on residues Glu273 and Glu305.

It belongs to the class I-like SAM-binding methyltransferase superfamily. Cation-independent O-methyltransferase family. COMT subfamily. As to quaternary structure, homodimer.

It catalyses the reaction (E)-5-hydroxyferulate + S-adenosyl-L-methionine = (E)-sinapate + S-adenosyl-L-homocysteine + H(+). The enzyme catalyses luteolin + S-adenosyl-L-methionine = chrysoeriol + S-adenosyl-L-homocysteine + H(+). It carries out the reaction quercetin + S-adenosyl-L-methionine = isorhamnetin + S-adenosyl-L-homocysteine + H(+). The catalysed reaction is (E)-caffeate + S-adenosyl-L-methionine = (E)-ferulate + S-adenosyl-L-homocysteine + H(+). It catalyses the reaction a 3'-hydroxyflavone + S-adenosyl-L-methionine = a 3'-methoxyflavone + S-adenosyl-L-homocysteine + H(+). Its pathway is flavonoid metabolism. In terms of biological role, catalyzes the 3'-O-methylation of the flavonoids luteolin and quercetin. Catalyzes the 3- of 5-O-methylation of the phenylpropanoids caffeate and 5-hydroxyferulate. Substrate preference is 5-hydroxyferulate &gt; luteolin &gt; quercetin &gt; caffeate. Apigenin, kempferol and 3,4-dimethylquercetin do not seem to be substrates for methylation. The chain is Flavone 3'-O-methyltransferase OMT1 from Chrysosplenium americanum (American golden saxifrage).